The primary structure comprises 151 residues: UPF0336 protein Franean1_6066 (151 aa).

The MaoC-like domain maps to Val-8–Phe-127.

Belongs to the UPF0336 family.

The sequence is that of UPF0336 protein Franean1_6066 from Parafrankia sp. (strain EAN1pec).